The chain runs to 318 residues: Ubiquitin-like domain-containing CTD phosphatase 1 (318 aa).

Ala-2 is subject to N-acetylalanine. The Ubiquitin-like domain maps to Leu-3 to Ser-81. N6-acetyllysine is present on Lys-117. The FCP1 homology domain maps to Pro-133–Ile-294. Mg(2+) is bound by residues Asp-143, Asp-145, and Asp-253.

The cofactor is Mg(2+).

The protein resides in the nucleus. It catalyses the reaction O-phospho-L-seryl-[protein] + H2O = L-seryl-[protein] + phosphate. The enzyme catalyses O-phospho-L-threonyl-[protein] + H2O = L-threonyl-[protein] + phosphate. Dephosphorylates 26S nuclear proteasomes, thereby decreasing their proteolytic activity. Recruited to the 19S regulatory particle of the 26S proteasome through its interaction with 19S component PSMD2/RPN1. Once recruited, dephosphorylates 19S component PSMC2/RPT1 which impairs PSMC2 ATPase activity and disrupts 26S proteasome assembly. Has also been reported to stimulate the proteolytic activity of the 26S proteasome. The chain is Ubiquitin-like domain-containing CTD phosphatase 1 (UBLCP1) from Pongo abelii (Sumatran orangutan).